The following is a 285-amino-acid chain: Ribosomal protein L11 methyltransferase (285 aa).

S-adenosyl-L-methionine-binding residues include Thr131, Gly154, Asp176, and Asn223.

Belongs to the methyltransferase superfamily. PrmA family.

Its subcellular location is the cytoplasm. The catalysed reaction is L-lysyl-[protein] + 3 S-adenosyl-L-methionine = N(6),N(6),N(6)-trimethyl-L-lysyl-[protein] + 3 S-adenosyl-L-homocysteine + 3 H(+). Its function is as follows. Methylates ribosomal protein L11. This Brucella abortus (strain S19) protein is Ribosomal protein L11 methyltransferase.